The following is a 212-amino-acid chain: Probable nicotinate-nucleotide adenylyltransferase (212 aa).

The protein belongs to the NadD family.

The enzyme catalyses nicotinate beta-D-ribonucleotide + ATP + H(+) = deamido-NAD(+) + diphosphate. It participates in cofactor biosynthesis; NAD(+) biosynthesis; deamido-NAD(+) from nicotinate D-ribonucleotide: step 1/1. In terms of biological role, catalyzes the reversible adenylation of nicotinate mononucleotide (NaMN) to nicotinic acid adenine dinucleotide (NaAD). This is Probable nicotinate-nucleotide adenylyltransferase from Shewanella sp. (strain ANA-3).